A 935-amino-acid chain; its full sequence is Isoleucine--tRNA ligase (935 aa).

A 'HIGH' region motif is present at residues 58–68 (PYANGSIHVGH). Glu558 lines the L-isoleucyl-5'-AMP pocket. A 'KMSKS' region motif is present at residues 599-603 (KMSKS). Lys602 contributes to the ATP binding site. Zn(2+) contacts are provided by Cys897, Cys900, Cys917, and Cys920.

It belongs to the class-I aminoacyl-tRNA synthetase family. IleS type 1 subfamily. In terms of assembly, monomer. It depends on Zn(2+) as a cofactor.

It localises to the cytoplasm. The catalysed reaction is tRNA(Ile) + L-isoleucine + ATP = L-isoleucyl-tRNA(Ile) + AMP + diphosphate. Catalyzes the attachment of isoleucine to tRNA(Ile). As IleRS can inadvertently accommodate and process structurally similar amino acids such as valine, to avoid such errors it has two additional distinct tRNA(Ile)-dependent editing activities. One activity is designated as 'pretransfer' editing and involves the hydrolysis of activated Val-AMP. The other activity is designated 'posttransfer' editing and involves deacylation of mischarged Val-tRNA(Ile). In Francisella tularensis subsp. tularensis (strain WY96-3418), this protein is Isoleucine--tRNA ligase.